Reading from the N-terminus, the 208-residue chain is Potassium-transporting ATPase KdpC subunit (208 aa).

The helical transmembrane segment at Pro-6–Leu-26 threads the bilayer.

This sequence belongs to the KdpC family. The system is composed of three essential subunits: KdpA, KdpB and KdpC.

It localises to the cell membrane. Part of the high-affinity ATP-driven potassium transport (or Kdp) system, which catalyzes the hydrolysis of ATP coupled with the electrogenic transport of potassium into the cytoplasm. This subunit acts as a catalytic chaperone that increases the ATP-binding affinity of the ATP-hydrolyzing subunit KdpB by the formation of a transient KdpB/KdpC/ATP ternary complex. This Clostridioides difficile (strain 630) (Peptoclostridium difficile) protein is Potassium-transporting ATPase KdpC subunit.